We begin with the raw amino-acid sequence, 304 residues long: Acetyl-coenzyme A carboxylase carboxyl transferase subunit beta (304 aa).

The CoA carboxyltransferase N-terminal domain maps to 25–294 (LWIKCPETGE…EAARRESGSQ (270 aa)).

Belongs to the AccD/PCCB family. In terms of assembly, acetyl-CoA carboxylase is a heterohexamer composed of biotin carboxyl carrier protein (AccB), biotin carboxylase (AccC) and two subunits each of ACCase subunit alpha (AccA) and ACCase subunit beta (AccD).

The protein localises to the cytoplasm. The catalysed reaction is N(6)-carboxybiotinyl-L-lysyl-[protein] + acetyl-CoA = N(6)-biotinyl-L-lysyl-[protein] + malonyl-CoA. It functions in the pathway lipid metabolism; malonyl-CoA biosynthesis; malonyl-CoA from acetyl-CoA: step 1/1. Its function is as follows. Component of the acetyl coenzyme A carboxylase (ACC) complex. Biotin carboxylase (BC) catalyzes the carboxylation of biotin on its carrier protein (BCCP) and then the CO(2) group is transferred by the transcarboxylase to acetyl-CoA to form malonyl-CoA. The protein is Acetyl-coenzyme A carboxylase carboxyl transferase subunit beta of Sinorhizobium fredii (strain NBRC 101917 / NGR234).